The sequence spans 904 residues: Pantothenate kinase 2 (904 aa).

The segment at 1 to 56 is disordered; the sequence is MAANNNSDPILDEGGGGGVKHEAVGEAGEGKGGGGGAAATQAPAAMLPRSGSRPQL. The interval 1–472 is pantothenate kinase; the sequence is MAANNNSDPI…LGDLNEKISW (472 aa). A 4'-phosphopantetheine phosphatase region spans residues 473-904; sequence MEKFVQKGTQ…DCICKFEPVP (432 aa). Asp-735, Asn-736, and Asp-771 together coordinate Mn(2+). Positions 855 to 859 match the Subfamily II EGMGR motif motif; it reads EGMGR.

The protein in the N-terminal section; belongs to the type II pantothenate kinase family. This sequence in the C-terminal section; belongs to the damage-control phosphatase family. Phosphopantetheine phosphatase II subfamily. Mn(2+) serves as cofactor. The cofactor is Ni(2+).

The catalysed reaction is (R)-pantothenate + ATP = (R)-4'-phosphopantothenate + ADP + H(+). It carries out the reaction (R)-4'-phosphopantothenate + H2O = (R)-pantothenate + phosphate. The enzyme catalyses (R)-4'-phosphopantetheine + H2O = (R)-pantetheine + phosphate. It catalyses the reaction (R)-4'-phosphopantetheine sulfonate + H2O = (R)-pantetheine sulfonate + phosphate. Its pathway is cofactor biosynthesis; coenzyme A biosynthesis; CoA from (R)-pantothenate: step 1/5. Its function is as follows. Catalyzes the phosphorylation of pantothenate the first step in CoA biosynthesis. May play a role in the physiological regulation of the intracellular CoA concentration. Functionally redudant with PANK1. The phosphatase activity shows preference for normal or oxidatively damaged intermediates of 4'-phosphopantetheine, which provides strong indirect evidence that the phosphatase activity pre-empts damage in the CoA pathway. Hydrolyzing excess 4'-phosphopantetheine could constitute a directed overflow mechanism to prevent its oxidation to the S-sulfonate, sulfonate, or other forms. Hydrolyzing 4'-phosphopantetheine sulfonate or S-sulfonate would forestall their conversion to inactive forms of CoA and acyl carrier protein. This Oryza sativa subsp. japonica (Rice) protein is Pantothenate kinase 2.